The following is a 329-amino-acid chain: Cytosolic Fe-S cluster assembly factor NBP35 (329 aa).

Positions 1–33 (MAPSQVEDISKTELETPEHCPGPESEQAGKEDA) are disordered. The span at 8-18 (DISKTELETPE) shows a compositional bias: basic and acidic residues. [4Fe-4S] cluster-binding residues include C20, C34, C37, and C43. An ATP-binding site is contributed by 74–81 (GKGGVGKS). 2 residues coordinate [4Fe-4S] cluster: C248 and C251.

The protein belongs to the Mrp/NBP35 ATP-binding proteins family. NUBP1/NBP35 subfamily. Heterotetramer of 2 NBP35 and 2 CFD1 chains. Requires [4Fe-4S] cluster as cofactor.

The protein resides in the cytoplasm. The protein localises to the nucleus. In terms of biological role, component of the cytosolic iron-sulfur (Fe/S) protein assembly (CIA) machinery. Required for maturation of extramitochondrial Fe-S proteins. The NBP35-CFD1 heterotetramer forms a Fe-S scaffold complex, mediating the de novo assembly of an Fe-S cluster and its transfer to target apoproteins. Required for biogenesis and export of both ribosomal subunits, which may reflect a role in assembly of the Fe/S clusters in RLI1, a protein which performs rRNA processing and ribosome export. In Debaryomyces hansenii (strain ATCC 36239 / CBS 767 / BCRC 21394 / JCM 1990 / NBRC 0083 / IGC 2968) (Yeast), this protein is Cytosolic Fe-S cluster assembly factor NBP35.